Consider the following 675-residue polypeptide: Alpha-1,4-glucan:maltose-1-phosphate maltosyltransferase (675 aa).

Alpha-maltose 1-phosphate-binding residues include Lys-256, Gln-316, and Asp-351. Catalysis depends on Asp-386, which acts as the Nucleophile. Asn-387 is a binding site for alpha-maltose 1-phosphate. Glu-415 (proton donor) is an active-site residue. 525 to 526 (KY) is a binding site for alpha-maltose 1-phosphate.

It belongs to the glycosyl hydrolase 13 family. GlgE subfamily. As to quaternary structure, homodimer.

The enzyme catalyses alpha-maltose 1-phosphate + [(1-&gt;4)-alpha-D-glucosyl](n) = [(1-&gt;4)-alpha-D-glucosyl](n+2) + phosphate. Functionally, maltosyltransferase that uses maltose 1-phosphate (M1P) as the sugar donor to elongate linear or branched alpha-(1-&gt;4)-glucans. Is involved in a branched alpha-glucan biosynthetic pathway from trehalose, together with TreS, Mak and GlgB. This chain is Alpha-1,4-glucan:maltose-1-phosphate maltosyltransferase, found in Corynebacterium glutamicum (strain ATCC 13032 / DSM 20300 / JCM 1318 / BCRC 11384 / CCUG 27702 / LMG 3730 / NBRC 12168 / NCIMB 10025 / NRRL B-2784 / 534).